The chain runs to 101 residues: uncharacterized protein (101 aa).

The signal sequence occupies residues 1–21 (MKLSTCCAALLLALASPAVLA). Over residues 79 to 94 (RTTSGNVSAPAQSSQD) the composition is skewed to polar residues. The interval 79 to 101 (RTTSGNVSAPAQSSQDGAPAEPQ) is disordered.

This is an uncharacterized protein from Escherichia coli (strain K12).